The sequence spans 63 residues: Large ribosomal subunit protein uL29 (63 aa).

Belongs to the universal ribosomal protein uL29 family.

This is Large ribosomal subunit protein uL29 from Escherichia coli O8 (strain IAI1).